A 257-amino-acid polypeptide reads, in one-letter code: Zinc import ATP-binding protein ZnuC (257 aa).

In terms of domain architecture, ABC transporter spans 5–220; sequence ITLKNVAVNF…PEFIAMFGHH (216 aa). 37–44 is an ATP binding site; the sequence is GPNGAGKS.

The protein belongs to the ABC transporter superfamily. Zinc importer (TC 3.A.1.15.5) family. In terms of assembly, the complex is composed of two ATP-binding proteins (ZnuC), two transmembrane proteins (ZnuB) and a solute-binding protein (ZnuA).

It is found in the cell inner membrane. The catalysed reaction is Zn(2+)(out) + ATP(in) + H2O(in) = Zn(2+)(in) + ADP(in) + phosphate(in) + H(+)(in). Its function is as follows. Part of the ABC transporter complex ZnuABC involved in zinc import. Responsible for energy coupling to the transport system. The polypeptide is Zinc import ATP-binding protein ZnuC (Photorhabdus laumondii subsp. laumondii (strain DSM 15139 / CIP 105565 / TT01) (Photorhabdus luminescens subsp. laumondii)).